A 59-amino-acid chain; its full sequence is Phycobilisome degradation protein NblA (59 aa).

This sequence to chloroplast ycf18.

Functionally, involved in phycobilisome (PBS) degradation during nutrient deprivation. May mark the PBS for degradation by covalent association with PBS components or may disrupt the PBS via ionic interactions. The sequence is that of Phycobilisome degradation protein NblA from Synechococcus elongatus (strain ATCC 33912 / PCC 7942 / FACHB-805) (Anacystis nidulans R2).